A 406-amino-acid chain; its full sequence is NADH-ubiquinone oxidoreductase 49 kDa subunit (406 aa).

Belongs to the complex I 49 kDa subunit family. Complex I is composed of 45 different subunits. Component of the iron-sulfur (IP) fragment of the enzyme.

The protein localises to the mitochondrion inner membrane. The enzyme catalyses a ubiquinone + NADH + 5 H(+)(in) = a ubiquinol + NAD(+) + 4 H(+)(out). In terms of biological role, core subunit of the mitochondrial membrane respiratory chain NADH dehydrogenase (Complex I) that is believed to belong to the minimal assembly required for catalysis. Complex I functions in the transfer of electrons from NADH to the respiratory chain. The immediate electron acceptor for the enzyme is believed to be ubiquinone. This is NADH-ubiquinone oxidoreductase 49 kDa subunit (nad7) from Dictyostelium discoideum (Social amoeba).